A 385-amino-acid polypeptide reads, in one-letter code: Spermidine/putrescine import ATP-binding protein PotA (385 aa).

Residues 6 to 238 (IEFKNVSKVF…PINHFVATFI (233 aa)) form the ABC transporter domain. Residue 40–47 (GSSGSGKS) coordinates ATP.

This sequence belongs to the ABC transporter superfamily. Spermidine/putrescine importer (TC 3.A.1.11.1) family. The complex is composed of two ATP-binding proteins (PotA), two transmembrane proteins (PotB and PotC) and a solute-binding protein (PotD).

The protein resides in the cell membrane. The enzyme catalyses ATP + H2O + polyamine-[polyamine-binding protein]Side 1 = ADP + phosphate + polyamineSide 2 + [polyamine-binding protein]Side 1.. Its function is as follows. Part of the ABC transporter complex PotABCD involved in spermidine/putrescine import. Responsible for energy coupling to the transport system. The polypeptide is Spermidine/putrescine import ATP-binding protein PotA (Streptococcus sanguinis (strain SK36)).